The primary structure comprises 266 residues: Interleukin-1 beta (266 aa).

A propeptide spanning residues 1–113 (MAPVPEPINE…ETSSDEFLCD (113 aa)) is cleaved from the precursor.

The protein belongs to the IL-1 family. Monomer. In its precursor form, weakly interacts with full-length MEFV; the mature cytokine does not interact at all. Interacts with integrins ITGAV:ITGBV and ITGA5:ITGB1; integrin-binding is required for IL1B signaling. Interacts with cargo receptor TMED10; the interaction is direct and is required for the secretion of IL1B mature form. Interacts with HSP90AB1; the interaction facilitates cargo translocation into the ERGIC. Interacts with HSP90B1; the interaction facilitates cargo translocation into the ERGIC.

Its subcellular location is the cytoplasm. The protein resides in the cytosol. It is found in the secreted. It localises to the lysosome. The protein localises to the extracellular exosome. Functionally, potent pro-inflammatory cytokine. Initially discovered as the major endogenous pyrogen, induces prostaglandin synthesis, neutrophil influx and activation, T-cell activation and cytokine production, B-cell activation and antibody production, and fibroblast proliferation and collagen production. Promotes Th17 differentiation of T-cells. Synergizes with IL12/interleukin-12 to induce IFNG synthesis from T-helper 1 (Th1) cells. Plays a role in angiogenesis by inducing VEGF production synergistically with TNF and IL6. Involved in transduction of inflammation downstream of pyroptosis: its mature form is specifically released in the extracellular milieu by passing through the gasdermin-D (GSDMD) pore. The polypeptide is Interleukin-1 beta (IL1B) (Cervus elaphus (Red deer)).